Here is a 446-residue protein sequence, read N- to C-terminus: tRNA modification GTPase MnmE (446 aa).

The (6S)-5-formyl-5,6,7,8-tetrahydrofolate site is built by Arg24, Glu81, and Lys120. The TrmE-type G domain maps to 216 to 368 (GLHAVLIGPP…LHIRLRALAL (153 aa)). Asn226 is a K(+) binding site. GTP-binding positions include 226-231 (NAGKSS), 245-251 (TDVAGTT), and 270-273 (DTAG). Mg(2+) is bound at residue Ser230. K(+) is bound by residues Thr245, Val247, and Thr250. Thr251 contributes to the Mg(2+) binding site. Lys446 is a binding site for (6S)-5-formyl-5,6,7,8-tetrahydrofolate.

It belongs to the TRAFAC class TrmE-Era-EngA-EngB-Septin-like GTPase superfamily. TrmE GTPase family. Homodimer. Heterotetramer of two MnmE and two MnmG subunits. The cofactor is K(+).

The protein localises to the cytoplasm. Its function is as follows. Exhibits a very high intrinsic GTPase hydrolysis rate. Involved in the addition of a carboxymethylaminomethyl (cmnm) group at the wobble position (U34) of certain tRNAs, forming tRNA-cmnm(5)s(2)U34. In Xanthomonas euvesicatoria pv. vesicatoria (strain 85-10) (Xanthomonas campestris pv. vesicatoria), this protein is tRNA modification GTPase MnmE.